The chain runs to 338 residues: Glyceraldehyde-3-phosphate dehydrogenase (338 aa).

NAD(+) contacts are provided by R13, I14, D35, R80, and S123. Positions 152, 153, 154, 183, 198, 212, 213, and 235 each coordinate D-glyceraldehyde 3-phosphate. The active-site Nucleophile is the C153. N317 serves as a coordination point for NAD(+).

It belongs to the glyceraldehyde-3-phosphate dehydrogenase family. In terms of assembly, homotetramer.

Its subcellular location is the tegument membrane. It carries out the reaction D-glyceraldehyde 3-phosphate + phosphate + NAD(+) = (2R)-3-phospho-glyceroyl phosphate + NADH + H(+). The protein operates within carbohydrate degradation; glycolysis; pyruvate from D-glyceraldehyde 3-phosphate: step 1/5. Functionally, this antigen is associated with human resistance to schistosomiasis. The polypeptide is Glyceraldehyde-3-phosphate dehydrogenase (Schistosoma mansoni (Blood fluke)).